The following is an 840-amino-acid chain: MKLSPREVEKLGLHNAGYLAQKRLARGVRLNYTEAVALIASQIMEYARDGEKTVAQLMCLGQHLLGRRQVLPAVPHLLNAVQVEATFPDGTKLVTVHDPISRENGELQEALFGSLLPVPSLDKFAETKEDNRIPGEILCEDECLTLNIGRKAVILKVTSKGDRPIQVGSHYHFIEVNPYLTFDRRKAYGMRLNIAAGTAVRFEPGDCKSVTLVSIEGNKVIRGGNAIADGPVNETNLEAAMHAVRSKGFGHEEEKDASEGFTKEDPNCPFNTFIHRKEYANKYGPTTGDKIRLGDTNLLAEIEKDYALYGDECVFGGGKVIRDGMGQSCGHPPAISLDTVITNAVIIDYTGIIKADIGIKDGLIASIGKAGNPDIMNGVFSNMIIGANTEVIAGEGLIVTAGAIDCHVHYICPQLVYEAISSGITTLVGGGTGPAAGTRATTCTPSPTQMRLMLQSTDDLPLNFGFTGKGSSSKPDELHEIIKAGAMGLKLHEDWGSTPAAIDNCLTIAEHHDIQINIHTDTLNEAGFVEHSIAAFKGRTIHTYHSEGAGGGHAPDIIKVCGIKNVLPSSTNPTRPLTSNTIDEHLDMLMVCHHLDREIPEDLAFAHSRIRKKTIAAEDVLNDIGAISIISSDSQAMGRVGEVISRTWQTADKMKAQTGPLKCDSSDNDNFRIRRYIAKYTINPAIANGFSQYVGSVEVGKLADLVMWKPSFFGTKPEMVIKGGMVAWADIGDPNASIPTPEPVKMRPMYGTLGKAGGALSIAFVSKAALDQRVNVLYGLNKRVEAVSNVRKLTKLDMKLNDALPEITVDPESYTVKADGKLLCVSEATTVPLSRNYFLF.

The 439-residue stretch at 402–840 (GAIDCHVHYI…VPLSRNYFLF (439 aa)) folds into the Urease domain. Ni(2+)-binding residues include His407, His409, and Lys490. An N6-carboxylysine modification is found at Lys490. Position 492 (His492) interacts with substrate. Ni(2+) is bound by residues His519 and His545. The Proton donor role is filled by His593. A Ni(2+)-binding site is contributed by Asp633.

The protein in the C-terminal section; belongs to the metallo-dependent hydrolases superfamily. Urease alpha subunit family. Homohexamer. Other oligomeric forms may exist depending on pH and presence of salts. The cofactor is Ni cation. In terms of processing, carboxylation allows a single lysine to coordinate two nickel ions.

The catalysed reaction is urea + 2 H2O + H(+) = hydrogencarbonate + 2 NH4(+). It functions in the pathway nitrogen metabolism; urea degradation; CO(2) and NH(3) from urea (urease route): step 1/1. Its activity is regulated as follows. P-hydroxymercuribenzoate irreversibly abolishes ureolytic activity, but does not inhibit the ability to activate platelets. Also inhibited by acetohydroxamic acid (AHA), a chelator of Ni2+ and Zn2+ ions. Functionally, urea hydrolase involved in nitrogen recycling from ureide, purine, and arginine catabolism. Is known to be highly toxic and lethal when given by intravenous route, producing convulsions and other signs of central nervous system intoxication associated with the high levels of ammonia formed in the blood of mice and rabbits. Is neurotoxic in mammals, when directly injected into hippocampus. It may induce seizures by acting at a neuronal network level, thereby disturbing electroencephalographic rhythms and causing metabolic alterations in key areas related to epileptogenesis and to neurogenic pulmonary edema. It increases calcium influx and neuronal firing rate in the hippocampus. Is able to insert itself into lipid bilayers, altering physicochemical properties of artificial membranes, and forming cation-selective ion channels. In vitro, has the ability to induce platelet aggregation, platelet granules secretion and release of ATP. In contrast to canatoxin, another urease from C.ensiformis, is not lethal to mice when intraperitoneally injected. The protein is Urease of Canavalia ensiformis (Jack bean).